The primary structure comprises 207 residues: Putative 3-methyladenine DNA glycosylase (207 aa).

This sequence belongs to the DNA glycosylase MPG family.

This is Putative 3-methyladenine DNA glycosylase from Listeria welshimeri serovar 6b (strain ATCC 35897 / DSM 20650 / CCUG 15529 / CIP 8149 / NCTC 11857 / SLCC 5334 / V8).